We begin with the raw amino-acid sequence, 95 residues long: Large ribosomal subunit protein bL25 (95 aa).

The protein belongs to the bacterial ribosomal protein bL25 family. Part of the 50S ribosomal subunit; part of the 5S rRNA/L5/L18/L25 subcomplex. Contacts the 5S rRNA. Binds to the 5S rRNA independently of L5 and L18.

This is one of the proteins that binds to the 5S RNA in the ribosome where it forms part of the central protuberance. The chain is Large ribosomal subunit protein bL25 from Aeromonas salmonicida (strain A449).